We begin with the raw amino-acid sequence, 564 residues long: 2-succinyl-5-enolpyruvyl-6-hydroxy-3-cyclohexene-1-carboxylate synthase (564 aa).

This sequence belongs to the TPP enzyme family. MenD subfamily. As to quaternary structure, homodimer. Mg(2+) is required as a cofactor. It depends on Mn(2+) as a cofactor. Thiamine diphosphate serves as cofactor.

It carries out the reaction isochorismate + 2-oxoglutarate + H(+) = 5-enolpyruvoyl-6-hydroxy-2-succinyl-cyclohex-3-ene-1-carboxylate + CO2. It participates in quinol/quinone metabolism; 1,4-dihydroxy-2-naphthoate biosynthesis; 1,4-dihydroxy-2-naphthoate from chorismate: step 2/7. The protein operates within quinol/quinone metabolism; menaquinone biosynthesis. Its function is as follows. Catalyzes the thiamine diphosphate-dependent decarboxylation of 2-oxoglutarate and the subsequent addition of the resulting succinic semialdehyde-thiamine pyrophosphate anion to isochorismate to yield 2-succinyl-5-enolpyruvyl-6-hydroxy-3-cyclohexene-1-carboxylate (SEPHCHC). This chain is 2-succinyl-5-enolpyruvyl-6-hydroxy-3-cyclohexene-1-carboxylate synthase, found in Vibrio vulnificus (strain CMCP6).